The primary structure comprises 162 residues: Glutathione peroxidase-like peroxiredoxin GPX5 (162 aa).

Cys-38 is subject to S-selanylcysteine. The active site involves Asn-87.

It belongs to the glutathione peroxidase family. Post-translationally, cys-87 is S-selanylated when selenium levels are high. S-selanylation may increase or be important for glutathione peroxidase activity.

It is found in the cytoplasm. It carries out the reaction 2 glutathione + H2O2 = glutathione disulfide + 2 H2O. The catalysed reaction is a hydroperoxide + [thioredoxin]-dithiol = an alcohol + [thioredoxin]-disulfide + H2O. Functionally, has thioredoxin peroxidase activity. May also have glutathione peroxidase activity, although this activity is controversial. Protects cells against reactive oxygen species, which may include photooxidative stress, hydrogen peroxide and organic hydroperoxides. The chain is Glutathione peroxidase-like peroxiredoxin GPX5 from Chlamydomonas reinhardtii (Chlamydomonas smithii).